The primary structure comprises 315 residues: Taste receptor type 2 member 3 (315 aa).

Topologically, residues 1 to 5 (MGLTE) are extracellular. A helical transmembrane segment spans residues 6 to 26 (GLFLILSGTQFALGILVNCFI). At 27–41 (GLVNGSSWFKTKRMS) the chain is on the cytoplasmic side. Residues 42–62 (LSDFIITTLAFLRIILLCIIL) traverse the membrane as a helical segment. Residues 63–93 (TDSFLIEFSPNAHDSGVIMQIIDVSWTFTNH) are Extracellular-facing. Residues 94–114 (LSIWLATCLGVLYCLKIASFS) traverse the membrane as a helical segment. At 115 to 127 (HPTFLWLKWRVSR) the chain is on the cytoplasmic side. Residues 128–148 (VMVWMLLGVLLLSCGSTASLI) form a helical membrane-spanning segment. Topologically, residues 149–185 (NEFKLYSVFRGIEATXNVTEHFRKKRSEYYLIHVLGT) are extracellular. A glycan (N-linked (GlcNAc...) asparagine) is linked at N165. Residues 186–206 (LWYLPPLIVSLAAYFLLIFSL) traverse the membrane as a helical segment. Over 207–233 (GRHTRQMLQNGTSSRDPSTEAHKRAIR) the chain is Cytoplasmic. The chain crosses the membrane as a helical span at residues 234–254 (IILSSFFLFLLYFLAFLIASF). The Extracellular portion of the chain corresponds to 255–265 (GNFLPKTKMAK). A helical transmembrane segment spans residues 266-286 (MIGEVMTMFYPAGHSFILILG). The Cytoplasmic portion of the chain corresponds to 287–315 (NSKLKQTFVEMLRCESGHLKPGSKGPIFS).

It belongs to the G-protein coupled receptor T2R family.

Its subcellular location is the membrane. Gustducin-coupled receptor implicated in the perception of bitter compounds in the oral cavity and the gastrointestinal tract. Signals through PLCB2 and the calcium-regulated cation channel TRPM5. This Pongo pygmaeus (Bornean orangutan) protein is Taste receptor type 2 member 3 (TAS2R3).